A 542-amino-acid polypeptide reads, in one-letter code: POTE ankyrin domain family member C (542 aa).

ANK repeat units follow at residues 138-171 (EDLD…KRDK), 172-201 (QKRT…QLNV), 205-234 (KKRT…DQNI), 238-267 (YGNT…DIES), 271-300 (CGLT…NLNA), 304-333 (YGRT…DVSS), and 337-373 (SGQT…SENS). The interval 369 to 494 (SSENSNPEQD…NTGISQDEIL (126 aa)) is disordered. Basic and acidic residues-rich tracts occupy residues 377 to 392 (QDLK…RLKV), 401 to 412 (MSQEPEINKDCD), and 466 to 481 (EEYH…KQLS). Residues 482 to 494 (EEQNTGISQDEIL) are compositionally biased toward polar residues. Positions 489 to 538 (SQDEILTNKQKQIEVAEKKMNSELSLSHKKEEDLLRENSMLQEEIAMLIS) form a coiled coil.

Belongs to the POTE family. In terms of tissue distribution, expressed in prostate and testis.

This chain is POTE ankyrin domain family member C (POTEC), found in Homo sapiens (Human).